A 218-amino-acid chain; its full sequence is Hypoxanthine-guanine phosphoribosyltransferase (218 aa).

Residue Ala-2 is modified to N-acetylalanine. Lys-69 serves as a coordination point for GMP. Lys-103 bears the N6-acetyllysine mark. Lys-115 is covalently cross-linked (Glycyl lysine isopeptide (Lys-Gly) (interchain with G-Cter in SUMO1); alternate). Residue Lys-115 forms a Glycyl lysine isopeptide (Lys-Gly) (interchain with G-Cter in SUMO2); alternate linkage. GMP is bound by residues 134 to 142 (EDIIDTGKT), Lys-166, 186 to 188 (KFV), and Asp-194. Asp-138 (proton acceptor) is an active-site residue. Thr-142 carries the post-translational modification Phosphothreonine. A Mg(2+)-binding site is contributed by Asp-194.

This sequence belongs to the purine/pyrimidine phosphoribosyltransferase family. In terms of assembly, homotetramer. The cofactor is Mg(2+).

The protein localises to the cytoplasm. The enzyme catalyses IMP + diphosphate = hypoxanthine + 5-phospho-alpha-D-ribose 1-diphosphate. The catalysed reaction is GMP + diphosphate = guanine + 5-phospho-alpha-D-ribose 1-diphosphate. The protein operates within purine metabolism; IMP biosynthesis via salvage pathway; IMP from hypoxanthine: step 1/1. In terms of biological role, converts guanine to guanosine monophosphate, and hypoxanthine to inosine monophosphate. Transfers the 5-phosphoribosyl group from 5-phosphoribosylpyrophosphate onto the purine. Plays a central role in the generation of purine nucleotides through the purine salvage pathway. The polypeptide is Hypoxanthine-guanine phosphoribosyltransferase (HPRT1) (Homo sapiens (Human)).